The sequence spans 121 residues: Urotensin-2 (121 aa).

A signal peptide spans 1–19 (MSKLVPCLLLLGCLGLLFA). Positions 20 to 106 (LPVPDSRKEP…HLLARIKKPY (87 aa)) are excised as a propeptide. A disulfide bridge links C115 with C120.

The protein belongs to the urotensin-2 family.

It localises to the secreted. In terms of biological role, highly potent vasoconstrictor. The polypeptide is Urotensin-2 (UTS2) (Sus scrofa (Pig)).